Reading from the N-terminus, the 480-residue chain is Glycerol 3-phosphate dehydrogenase (480 aa).

Residues I12, E31, 40–41, and 45–47 each bind FAD; these read TT and SAI. Positions 45 and 49 each coordinate sn-glycerol 3-phosphate. H49 serves as the catalytic Proton acceptor. FAD is bound at residue V172. Residues K249 and R310 each contribute to the sn-glycerol 3-phosphate site. 335-336 serves as a coordination point for FAD; it reads IE. S337 is a sn-glycerol 3-phosphate binding site. S341 contacts FAD. 4 residues coordinate [2Fe-2S] cluster: C400, C402, C437, and C442.

[2Fe-2S] cluster serves as cofactor.

The enzyme catalyses sn-glycerol 3-phosphate + A = dihydroxyacetone phosphate + AH2. Its pathway is polyol metabolism; glycerol degradation via glycerol kinase pathway; glycerone phosphate from sn-glycerol 3-phosphate (aerobic route): step 1/1. Functionally, catalyzes the dehydrogenation of glycerol 3-phosphate to dihydroxyacetone phosphate. Is probably involved in anaerobic glycerol metabolism. Active in vitro with the artificial electron acceptor 2,6-dichlorophenolindophenol (DCPIP), but not with NAD or NADP. Also displays a very low oxidase activity in vitro on glycerol 3-phosphate with O2 as the electron acceptor, but this activity is most likely not physiological. This chain is Glycerol 3-phosphate dehydrogenase, found in Caloramator mitchellensis.